We begin with the raw amino-acid sequence, 48 residues long: uncharacterized protein (48 aa).

This is an uncharacterized protein from Mus musculus domesticus (western European house mouse).